Here is a 277-residue protein sequence, read N- to C-terminus: MSDGKLLSAFEEELRKAQSLEELKQKYEEAQKQIADGKVLKRLYKVYEKRQTELMLQQYRQIKAELEKRKKVKKKDKADIRVRVVKKWINSRLFSAEHYVALLQENQDGLSILFLRRAKLIENQGYLMLEVKKLRKAWVLTAEPILLERLKFPFGKKFVAVHFVLPNYPYTLQLKPDEKLKELAVKAINGPQIMSAMIRTKFFEALARVGSGPDLMMLIIGVVMGIGIGVAIGFGIANANLTHLLSQHVTNTTVTHTTTTTTSPSFTIPSNSSKGVS.

Positions 256 to 277 are disordered; the sequence is HTTTTTTSPSFTIPSNSSKGVS.

This protein may be involved in virus assembly. Essential for virus function. This is an uncharacterized protein from Saccharolobus solfataricus (Sulfolobus solfataricus).